Consider the following 408-residue polypeptide: Peptidoglycan muramidase Tse3 (408 aa).

Ca(2+) is bound by residues Asn-181, Asp-253, Gln-254, Glu-258, Glu-375, Ser-378, Arg-379, Asp-382, and Asn-384.

In terms of assembly, forms a heterotetramer with Tsi3 consisting of two Tse3 dimers and two Tsi3 dimers. Formation of the complex inactivates Tse3 enzymatic activity. The cofactor is Ca(2+).

The protein resides in the host membrane. It is found in the secreted. It carries out the reaction Hydrolysis of (1-&gt;4)-beta-linkages between N-acetylmuramic acid and N-acetyl-D-glucosamine residues in a peptidoglycan and between N-acetyl-D-glucosamine residues in chitodextrins.. Its activity is regulated as follows. Enzymatic activity depends on membrane binding. Its function is as follows. Toxin secreted by the H1 type VI (H1-T6SS) secretion system into the periplasm of recipient cells. Degrades peptidoglycan via muramidase activity thereby helping itself to compete with other bacteria. To protect itself, the bacterium synthesizes immunity protein Tsi3 that specifically interacts with and inactivates cognate toxin. This chain is Peptidoglycan muramidase Tse3, found in Pseudomonas aeruginosa (strain ATCC 15692 / DSM 22644 / CIP 104116 / JCM 14847 / LMG 12228 / 1C / PRS 101 / PAO1).